Consider the following 504-residue polypeptide: ATP synthase subunit alpha (504 aa).

169 to 176 is an ATP binding site; that stretch reads GDRQTGKT.

The protein belongs to the ATPase alpha/beta chains family. In terms of assembly, F-type ATPases have 2 components, CF(1) - the catalytic core - and CF(0) - the membrane proton channel. CF(1) has five subunits: alpha(3), beta(3), gamma(1), delta(1), epsilon(1). CF(0) has three main subunits: a(1), b(2) and c(9-12). The alpha and beta chains form an alternating ring which encloses part of the gamma chain. CF(1) is attached to CF(0) by a central stalk formed by the gamma and epsilon chains, while a peripheral stalk is formed by the delta and b chains.

It is found in the cell membrane. The enzyme catalyses ATP + H2O + 4 H(+)(in) = ADP + phosphate + 5 H(+)(out). Functionally, produces ATP from ADP in the presence of a proton gradient across the membrane. The alpha chain is a regulatory subunit. This chain is ATP synthase subunit alpha, found in Clostridium botulinum (strain Loch Maree / Type A3).